The sequence spans 432 residues: Adenylosuccinate synthetase (432 aa).

GTP-binding positions include 13-19 (GDEGKGK) and 41-43 (GHT). The active-site Proton acceptor is D14. Mg(2+) contacts are provided by D14 and G41. IMP is bound by residues 14–17 (DEGK), 39–42 (NAGH), T130, R144, Q225, T240, and R304. H42 serves as the catalytic Proton donor. Substrate is bound at residue 300-306 (AVTGRPR). Residues R306, 332 to 334 (KLD), and 415 to 417 (STG) each bind GTP.

It belongs to the adenylosuccinate synthetase family. In terms of assembly, homodimer. Mg(2+) serves as cofactor.

It localises to the cytoplasm. It carries out the reaction IMP + L-aspartate + GTP = N(6)-(1,2-dicarboxyethyl)-AMP + GDP + phosphate + 2 H(+). It participates in purine metabolism; AMP biosynthesis via de novo pathway; AMP from IMP: step 1/2. Functionally, plays an important role in the de novo pathway of purine nucleotide biosynthesis. Catalyzes the first committed step in the biosynthesis of AMP from IMP. The chain is Adenylosuccinate synthetase from Pasteurella multocida (strain Pm70).